Consider the following 336-residue polypeptide: Quinolinate synthase (336 aa).

Iminosuccinate is bound by residues His25 and Ser42. Cys86 lines the [4Fe-4S] cluster pocket. Iminosuccinate contacts are provided by residues 117-119 (YIN) and Ser138. [4Fe-4S] cluster is bound at residue Cys198. Residues 224–226 (HPE) and Thr241 contribute to the iminosuccinate site. Cys288 lines the [4Fe-4S] cluster pocket.

This sequence belongs to the quinolinate synthase family. Type 3 subfamily. [4Fe-4S] cluster is required as a cofactor.

The protein localises to the cytoplasm. The enzyme catalyses iminosuccinate + dihydroxyacetone phosphate = quinolinate + phosphate + 2 H2O + H(+). It functions in the pathway cofactor biosynthesis; NAD(+) biosynthesis; quinolinate from iminoaspartate: step 1/1. Its function is as follows. Catalyzes the condensation of iminoaspartate with dihydroxyacetone phosphate to form quinolinate. The chain is Quinolinate synthase from Helicobacter pylori (strain HPAG1).